A 337-amino-acid chain; its full sequence is MIREKVTVSTRTLQWKCVESRTDSKRLYYGRFILSPLMKGQADTIGIAMRRALLGEIEGTCITRVKSEKAPHEYSTIAGIQESVHEILMNLKEIVLRSNLYGTCDASICVKGPGCVTAEDIILPPSVEIVDNTQHIAWLTEPIDFCIGLQIERNRGYILKTHHNFEDGSYPIDAVFMPVRNANHSIHSYGNGNEKQEILFLEIWTNGSLTPKEALHEASRNLIDLFIPFLHMEEENLHLEDGEHTIPLSPLSFHDKVAKLRKNKKKLALKSIFIDQLEFPPKIYNCLKKSNISTLLDLLNKSQEDLMKIEHFHIEDVKQILGILEKHFAIDLPKNQF.

Residues methionine 1–glutamate 233 form an alpha N-terminal domain (alpha-NTD) region. The interval lysine 266–phenylalanine 337 is alpha C-terminal domain (alpha-CTD).

Belongs to the RNA polymerase alpha chain family. As to quaternary structure, in plastids the minimal PEP RNA polymerase catalytic core is composed of four subunits: alpha, beta, beta', and beta''. When a (nuclear-encoded) sigma factor is associated with the core the holoenzyme is formed, which can initiate transcription.

The protein localises to the plastid. Its subcellular location is the chloroplast. The enzyme catalyses RNA(n) + a ribonucleoside 5'-triphosphate = RNA(n+1) + diphosphate. Its function is as follows. DNA-dependent RNA polymerase catalyzes the transcription of DNA into RNA using the four ribonucleoside triphosphates as substrates. This Ipomoea purpurea (Common morning glory) protein is DNA-directed RNA polymerase subunit alpha.